Consider the following 897-residue polypeptide: DNA endonuclease RBBP8 (897 aa).

The essential for binding to the MRN complex and for RPA focus formation on DNA damage stretch occupies residues 22–45; the sequence is DLWTKLKECHDREVQGLQVKVTKL. Residues 35–84 adopt a coiled-coil conformation; it reads VQGLQVKVTKLKQERILDAQRLEEFFTKNQQLREQQKVLHETIKVLEDRL. Positions 45–160 are required for interaction with LMO4, probably by stabilizing the interaction through RPPB8 dimerization; sequence LKQERILDAQ…AELECEEDVI (116 aa). Glycyl lysine isopeptide (Lys-Gly) (interchain with G-Cter in SUMO2) cross-links involve residues Lys-62 and Lys-115. The stretch at 117-138 forms a coiled coil; the sequence is ITELMNERNTLQEENKKLSEQL. A Glycyl lysine isopeptide (Lys-Gly) (interchain with G-Cter in SUMO2) cross-link involves residue Lys-193. Ser-233 and Ser-276 each carry phosphoserine. The span at 292–307 shows a compositional bias: basic and acidic residues; that stretch reads KQPFEESTRNTEDSLR. The interval 292–325 is disordered; it reads KQPFEESTRNTEDSLRFSDSTSKTPPQEELPTRV. Thr-315 is modified (phosphothreonine; by CDK2). Ser-326, Ser-327, and Ser-349 each carry phosphoserine. Residues Lys-360 and Lys-378 each participate in a glycyl lysine isopeptide (Lys-Gly) (interchain with G-Cter in SUMO2) cross-link. Phosphoserine is present on Ser-379. Residues Lys-396, Lys-404, and Lys-410 each participate in a glycyl lysine isopeptide (Lys-Gly) (interchain with G-Cter in SUMO2) cross-link. Residues 419 to 464 form a disordered region; sequence QNRTEYGKDSNTDKHLEPLKSLGGRTSKRKKTEEESEHEVSCPQAS. Positions 420 to 436 are enriched in basic and acidic residues; that stretch reads NRTEYGKDSNTDKHLEP. Glycyl lysine isopeptide (Lys-Gly) (interchain with G-Cter in SUMO2) cross-links involve residues Lys-438 and Lys-449. Positions 490–494 match the PXDLS motif motif; it reads PLDLS. The segment at 509 to 557 is damage-recruitment motif; that stretch reads SETSKNKFRQVTLYEALKTIPKGFSSSRKASDGNCTLPKDSPGEPCSQE. Lys-526 participates in a covalent cross-link: Glycyl lysine isopeptide (Lys-Gly) (interchain with G-Cter in SUMO2); alternate. Glycyl lysine isopeptide (Lys-Gly) (interchain with G-Cter in SUMO2) cross-links involve residues Lys-530, Lys-572, and Lys-578. A Glycyl lysine isopeptide (Lys-Gly) (interchain with G-Cter in SUMO2); alternate cross-link involves residue Lys-604. Residues Lys-613, Lys-638, and Lys-640 each participate in a glycyl lysine isopeptide (Lys-Gly) (interchain with G-Cter in SUMO2) cross-link. A required for interaction with LMO4, probably by making physical contact with LMO4 region spans residues 641 to 685; that stretch reads SLQNNQDVSFENIQWSIDPGADLSQYKMDVTVIDTKDGSQSKLGG. At Ser-664 the chain carries Phosphoserine; by ATM. Lys-676 participates in a covalent cross-link: Glycyl lysine isopeptide (Lys-Gly) (interchain with G-Cter in SUMO2). Residue Ser-679 is modified to Phosphoserine. The disordered stretch occupies residues 704–723; it reads KKQEQKGEKSSNEERKMNDS. Lys-719 is covalently cross-linked (Glycyl lysine isopeptide (Lys-Gly) (interchain with G-Cter in SUMO2)). Position 723 is a phosphoserine (Ser-723). The residue at position 745 (Ser-745) is a Phosphoserine; by ATM. A Glycyl lysine isopeptide (Lys-Gly) (interchain with G-Cter in SUMO2) cross-link involves residue Lys-782. The short motif at 840 to 842 is the KLHL15-binding element; that stretch reads FRY. Thr-847 is subject to Phosphothreonine; by CDK1. Phosphothreonine; by ATR is present on Thr-859. Residue Lys-869 forms a Glycyl lysine isopeptide (Lys-Gly) (interchain with G-Cter in SUMO2) linkage. The tract at residues 873–897 is disordered; it reads DPCPRPKRRQPYNAIFSPKGKEQKT.

The protein belongs to the COM1/SAE2/CtIP family. In terms of assembly, homotetramer; formed by antiparallel association of helical extensions protruding from the N-termini of two parallel coiled-coil dimers. Forms a dumbbell-shaped particle in which polar globular domains are held about 30 nm apart by a central rod. Homotetramerization is required for DNA-end resection and repair. Interacts (via the PXDLS motif) with CTBP1; the interaction is disrupted via binding of the adenovirus E1A to CTBP1. Component of the BRCA1-RBBP8 complex. Interacts (the Ser-327 phosphorylated form) with BRCA1 (via the C-terminal BRCT domains): the interaction occurs in the G2 phase, ubiquitinates RBBP8 and involves RBBP8 in BRCA1-dependent G2/M checkpoint control on DNA damage. Interacts with RB1. Interacts with the MRN complex; interacts directly with MRE11; the interaction is required for efficient homologous recombination (HR) and regulation of the MRN complex. Interacts directly with RAD50. Interacts (when phosphorylated by CDK1) with NBN; promoting association with the MRN complex. Interacts with LM04 (via the LIM zinc-binding 1 domain). Interacts with SIAH1. Interacts with RNF138. Interacts with EXD2. Interacts with CUL3 and KLHL15; this interaction leads to RBBP8 proteasomal degradation. Directly interacts with PIN1; this interaction depends upon RBBP8 phosphorylation, predominantly at Thr-315. Interacts with FZR1; this interaction leads to APC/C-mediated RBBP8 proteasomal degradation. Interacts with AUNIP; leading to recruitment of RBBP8 to sites of DNA damage. Interacts with SAMHD1. Interacts with HDGFL2. Post-translationally, hyperphosphorylation upon ionizing radiation results in dissociation from BRCA1. Phosphorylation at Thr-847 by CDK1 is essential for the recruitment to DNA and the DNA repair function. Phosphorylation at Thr-847 and Thr-859 promote interaction with NBN and recruitment to double-strand breaks (DSBs). Phosphorylated on Ser-327 as cells enter G2 phase. This phosphorylation is required for binding BRCA1 and for the G2/M DNA damage transition checkpoint control. Phosphorylation at Thr-315, probably catalyzed by CDK2, is required for PIN1-binding, while phosphorylation at Ser-276 serves as a PIN1 isomerization site. Phosphorylation at Thr-315 is cell-cycle dependent. It steadily increases during S phase, peaks at late S/G2 phase, and drops at G1. Phosphorylation is not required for tetramerization. Binds to DNA more strongly when dephosphorylated. In terms of processing, ubiquitinated. Ubiquitination at multiple sites by BRCA1 (via its N-terminal RING domain) does not lead to its proteasomal degradation but instead the ubiquitinated RBBP8 binds to chromatin following DNA damage and may play a role in G2/M checkpoint control. Ubiquitinated by RNF138 at its N-terminus. Ubiquitinated through 'Lys-48' by the E3 CUL3-KLHL15 complex; this modification leads to proteasomal degradation. Ubiquitinated by the E3 FZR1/APC/C complex; this modification leads to proteasomal degradation. As to expression, expressed in ER-positive breast cancer lines, but tends to be down-regulated ER-negative cells (at protein level).

Its subcellular location is the nucleus. It localises to the chromosome. Endonuclease that cooperates with the MRE11-RAD50-NBN (MRN) complex in DNA-end resection, the first step of double-strand break (DSB) repair through the homologous recombination (HR) pathway. HR is restricted to S and G2 phases of the cell cycle and preferentially repairs DSBs resulting from replication fork collapse. Key determinant of DSB repair pathway choice, as it commits cells to HR by preventing classical non-homologous end-joining (NHEJ). Specifically promotes the endonuclease activity of the MRN complex to clear DNA ends containing protein adducts: recruited to DSBs by NBN following phosphorylation by CDK1, and promotes the endonuclease activity of MRE11 to clear protein-DNA adducts and generate clean double-strand break ends. Functions downstream of the MRN complex and ATM, promotes ATR activation and its recruitment to DSBs in the S/G2 phase facilitating the generation of ssDNA. Component of the BRCA1-RBBP8 complex that regulates CHEK1 activation and controls cell cycle G2/M checkpoints on DNA damage. During immunoglobulin heavy chain class-switch recombination, promotes microhomology-mediated alternative end joining (A-NHEJ) and plays an essential role in chromosomal translocations. Binds preferentially to DNA Y-junctions and to DNA substrates with blocked ends and promotes intermolecular DNA bridging. The polypeptide is DNA endonuclease RBBP8 (RBBP8) (Homo sapiens (Human)).